A 325-amino-acid chain; its full sequence is Olfactory receptor 5T18 (325 aa).

The Extracellular portion of the chain corresponds to 1 to 22; the sequence is MRNITEATFFVLKGLTDNNELQ. Asn3 carries an N-linked (GlcNAc...) asparagine glycan. The next 2 membrane-spanning stretches (helical) occupy residues 23–43 and 44–64; these read IILFLLFLAIYIFTLIGNVGL and IILVVGDSQLHNPMYCFLSVL. Residues 65 to 97 lie on the Extracellular side of the membrane; it reads SSVDACYSTDITPNMLVGFMSKSKIISFYGCAT. Cys95 and Cys187 are joined by a disulfide. The helical transmembrane segment at 98–118 threads the bilayer; it reads QMFLAVTFGTTECFLLAAMAY. Residues 119-139 lie on the Cytoplasmic side of the membrane; sequence DRYVAIHDPLLYAVSMSPRVY. The chain crosses the membrane as a helical span at residues 140–160; that stretch reads IPLIIASYAGGIVHAIIHTVA. At 161 to 194 the chain is on the extracellular side; sequence TFSLSFCRSNEVKHIFCDIPPLLAISCSETYVNE. Residues 195–215 form a helical membrane-spanning segment; the sequence is LLLFFFVSFIELVTILIVLVS. The Cytoplasmic segment spans residues 216-234; the sequence is YAFILLSILKMNSSEGRRK. Residues 235 to 255 traverse the membrane as a helical segment; the sequence is VFSTCGAHLTAVSIYYGTILF. The Extracellular portion of the chain corresponds to 256–269; that stretch reads MYVRPSSNYSLEHD. The chain crosses the membrane as a helical span at residues 270–290; it reads MIVSTFYTIGIPMLNPIIYSL. Topologically, residues 291–325 are cytoplasmic; it reads RNKDVKEAMKRVLRKKINIKHRIKKLNDFSVFLMP.

Belongs to the G-protein coupled receptor 1 family.

The protein resides in the cell membrane. In terms of biological role, potential odorant receptor. In Mus musculus (Mouse), this protein is Olfactory receptor 5T18.